Consider the following 184-residue polypeptide: Large ribosomal subunit protein uL5 (184 aa).

It belongs to the universal ribosomal protein uL5 family. In terms of assembly, part of the 50S ribosomal subunit; part of the 5S rRNA/L5/L18/L25 subcomplex. Contacts the 5S rRNA and the P site tRNA. Forms a bridge to the 30S subunit in the 70S ribosome.

This is one of the proteins that bind and probably mediate the attachment of the 5S RNA into the large ribosomal subunit, where it forms part of the central protuberance. In the 70S ribosome it contacts protein S13 of the 30S subunit (bridge B1b), connecting the 2 subunits; this bridge is implicated in subunit movement. Contacts the P site tRNA; the 5S rRNA and some of its associated proteins might help stabilize positioning of ribosome-bound tRNAs. The sequence is that of Large ribosomal subunit protein uL5 from Thermotoga maritima (strain ATCC 43589 / DSM 3109 / JCM 10099 / NBRC 100826 / MSB8).